The following is a 287-amino-acid chain: Succinate--CoA ligase [ADP-forming] subunit alpha 2 (287 aa).

CoA-binding positions include 17 to 20 (TGYQ), Lys-43, and 96 to 98 (ITE). Tyr-159 serves as a coordination point for substrate. Catalysis depends on His-246, which acts as the Tele-phosphohistidine intermediate.

It belongs to the succinate/malate CoA ligase alpha subunit family. In terms of assembly, heterotetramer of two alpha and two beta subunits.

The enzyme catalyses succinate + ATP + CoA = succinyl-CoA + ADP + phosphate. It catalyses the reaction GTP + succinate + CoA = succinyl-CoA + GDP + phosphate. Its pathway is carbohydrate metabolism; tricarboxylic acid cycle; succinate from succinyl-CoA (ligase route): step 1/1. Functionally, succinyl-CoA synthetase functions in the citric acid cycle (TCA), coupling the hydrolysis of succinyl-CoA to the synthesis of either ATP or GTP and thus represents the only step of substrate-level phosphorylation in the TCA. The alpha subunit of the enzyme binds the substrates coenzyme A and phosphate, while succinate binding and nucleotide specificity is provided by the beta subunit. The protein is Succinate--CoA ligase [ADP-forming] subunit alpha 2 of Archaeoglobus fulgidus (strain ATCC 49558 / DSM 4304 / JCM 9628 / NBRC 100126 / VC-16).